The sequence spans 1755 residues: Transposon Ty1-GR2 Gag-Pol polyprotein (1755 aa).

The span at 1–16 (MESQQLSQHSHISHGS) shows a compositional bias: low complexity. Disordered stretches follow at residues 1-93 (MESQ…MMTQ), 126-173 (PQSQ…RPPP), and 352-421 (GSRN…SKST). Composition is skewed to polar residues over residues 48–60 (TKAN…TPAS) and 127–152 (QSQF…GNTF). Over residues 153–165 (TDSSSADSDMTST) the composition is skewed to low complexity. An RNA-binding region spans residues 299–401 (NNGIHINNKV…NSKSKTARAH (103 aa)). The span at 402–418 (NVSTSNNSPSTDNDSIS) shows a compositional bias: low complexity. Ser416 is subject to Phosphoserine. Asp461 functions as the For protease activity; shared with dimeric partner in the catalytic mechanism. The segment at 583-640 (NVHTSESTRKYPYPFIHRMLAHANAQTIRYSLKNNTITYFNESDVDWSSAIDYQCPDC) is integrase-type zinc finger-like. One can recognise an Integrase catalytic domain in the interval 660 to 835 (NSYEPFQYLH…AGLDISTLLP (176 aa)). Mg(2+) contacts are provided by Asp671 and Asp736. 3 disordered regions span residues 956–1087 (SKAV…ETEK), 1092–1111 (RSPS…NIVP), and 1130–1187 (DLPL…DNET). Positions 960–969 (SPTDSTPPST) are enriched in low complexity. Polar residues predominate over residues 1005–1015 (STPQISNIEST). A compositionally biased stretch (basic and acidic residues) spans 1038–1053 (ESSHASKSKDFRHSDS). 2 stretches are compositionally biased toward polar residues: residues 1054 to 1082 (YSEN…QISD) and 1101 to 1111 (PENNSSHNIVP). The Bipartite nuclear localization signal signature appears at 1178 to 1212 (KKRSLEDNETEIKVSRDTWNTKNMRSLEPPRSKKR). In terms of domain architecture, Reverse transcriptase Ty1/copia-type spans 1338–1476 (NNYYITQLDI…DILGLEIKYQ (139 aa)). Residues Asp1346, Asp1427, Asp1428, Asp1610, Glu1652, and Asp1685 each contribute to the Mg(2+) site. The 143-residue stretch at 1610–1752 (DASYGNQPYY…IKTFKLLTNK (143 aa)) folds into the RNase H Ty1/copia-type domain.

In terms of assembly, the capsid protein forms a homotrimer, from which the VLPs are assembled. The protease is a homodimer, whose active site consists of two apposed aspartic acid residues. Initially, virus-like particles (VLPs) are composed of the structural unprocessed proteins Gag and Gag-Pol, and also contain the host initiator methionine tRNA (tRNA(i)-Met) which serves as a primer for minus-strand DNA synthesis, and a dimer of genomic Ty RNA. Processing of the polyproteins occurs within the particle and proceeds by an ordered pathway, called maturation. First, the protease (PR) is released by autocatalytic cleavage of the Gag-Pol polyprotein yielding capsid protein p45 and a Pol-p154 precursor protein. This cleavage is a prerequisite for subsequent processing of Pol-p154 at the remaining sites to release the mature structural and catalytic proteins. Maturation takes place prior to the RT reaction and is required to produce transposition-competent VLPs.

It localises to the cytoplasm. The protein resides in the nucleus. The enzyme catalyses DNA(n) + a 2'-deoxyribonucleoside 5'-triphosphate = DNA(n+1) + diphosphate. The catalysed reaction is Endonucleolytic cleavage to 5'-phosphomonoester.. Its function is as follows. Capsid protein (CA) is the structural component of the virus-like particle (VLP), forming the shell that encapsulates the retrotransposons dimeric RNA genome. The particles are assembled from trimer-clustered units and there are holes in the capsid shells that allow for the diffusion of macromolecules. CA also has nucleocapsid-like chaperone activity, promoting primer tRNA(i)-Met annealing to the multipartite primer-binding site (PBS), dimerization of Ty1 RNA and initiation of reverse transcription. In terms of biological role, the aspartyl protease (PR) mediates the proteolytic cleavages of the Gag and Gag-Pol polyproteins after assembly of the VLP. Reverse transcriptase/ribonuclease H (RT) is a multifunctional enzyme that catalyzes the conversion of the retro-elements RNA genome into dsDNA within the VLP. The enzyme displays a DNA polymerase activity that can copy either DNA or RNA templates, and a ribonuclease H (RNase H) activity that cleaves the RNA strand of RNA-DNA heteroduplexes during plus-strand synthesis and hydrolyzes RNA primers. The conversion leads to a linear dsDNA copy of the retrotransposon that includes long terminal repeats (LTRs) at both ends. Functionally, integrase (IN) targets the VLP to the nucleus, where a subparticle preintegration complex (PIC) containing at least integrase and the newly synthesized dsDNA copy of the retrotransposon must transit the nuclear membrane. Once in the nucleus, integrase performs the integration of the dsDNA into the host genome. In Saccharomyces cerevisiae (strain ATCC 204508 / S288c) (Baker's yeast), this protein is Transposon Ty1-GR2 Gag-Pol polyprotein (TY1B-GR2).